The sequence spans 219 residues: 2-C-methyl-D-erythritol 4-phosphate cytidylyltransferase (219 aa).

The protein belongs to the IspD/TarI cytidylyltransferase family. IspD subfamily.

The enzyme catalyses 2-C-methyl-D-erythritol 4-phosphate + CTP + H(+) = 4-CDP-2-C-methyl-D-erythritol + diphosphate. The protein operates within isoprenoid biosynthesis; isopentenyl diphosphate biosynthesis via DXP pathway; isopentenyl diphosphate from 1-deoxy-D-xylulose 5-phosphate: step 2/6. In terms of biological role, catalyzes the formation of 4-diphosphocytidyl-2-C-methyl-D-erythritol from CTP and 2-C-methyl-D-erythritol 4-phosphate (MEP). This Chlamydia trachomatis serovar D (strain ATCC VR-885 / DSM 19411 / UW-3/Cx) protein is 2-C-methyl-D-erythritol 4-phosphate cytidylyltransferase.